The following is a 184-amino-acid chain: Cell division protein ZapC (184 aa).

This sequence belongs to the ZapC family. In terms of assembly, interacts directly with FtsZ.

The protein resides in the cytoplasm. Its function is as follows. Contributes to the efficiency of the cell division process by stabilizing the polymeric form of the cell division protein FtsZ. Acts by promoting interactions between FtsZ protofilaments and suppressing the GTPase activity of FtsZ. The polypeptide is Cell division protein ZapC (Idiomarina loihiensis (strain ATCC BAA-735 / DSM 15497 / L2-TR)).